The following is a 161-amino-acid chain: ATP synthase subunit b 1 (161 aa).

The chain crosses the membrane as a helical span at residues 5-25 (PETWVAIAFLLLMGVFAYVGV).

Belongs to the ATPase B chain family. As to quaternary structure, F-type ATPases have 2 components, F(1) - the catalytic core - and F(0) - the membrane proton channel. F(1) has five subunits: alpha(3), beta(3), gamma(1), delta(1), epsilon(1). F(0) has three main subunits: a(1), b(2) and c(10-14). The alpha and beta chains form an alternating ring which encloses part of the gamma chain. F(1) is attached to F(0) by a central stalk formed by the gamma and epsilon chains, while a peripheral stalk is formed by the delta and b chains.

It is found in the cell inner membrane. In terms of biological role, f(1)F(0) ATP synthase produces ATP from ADP in the presence of a proton or sodium gradient. F-type ATPases consist of two structural domains, F(1) containing the extramembraneous catalytic core and F(0) containing the membrane proton channel, linked together by a central stalk and a peripheral stalk. During catalysis, ATP synthesis in the catalytic domain of F(1) is coupled via a rotary mechanism of the central stalk subunits to proton translocation. Its function is as follows. Component of the F(0) channel, it forms part of the peripheral stalk, linking F(1) to F(0). The chain is ATP synthase subunit b 1 from Nitrobacter winogradskyi (strain ATCC 25391 / DSM 10237 / CIP 104748 / NCIMB 11846 / Nb-255).